The following is a 318-amino-acid chain: Olfactory receptor 10H1 (318 aa).

The Extracellular segment spans residues 1–25; that stretch reads MQRANHSTVTQFILVGFSVFPHLQL. A glycan (N-linked (GlcNAc...) asparagine) is linked at N5. The chain crosses the membrane as a helical span at residues 26–46; that stretch reads MLFLLFLLMYLFTLLGNLLIM. The Cytoplasmic segment spans residues 47-54; that stretch reads ATVWSERS. A helical transmembrane segment spans residues 55-75; that stretch reads LHTPMYLFLCALSVSEILYTV. Topologically, residues 76 to 99 are extracellular; the sequence is AIIPRMLADLLSTQRSIAFLACAS. C97 and C189 are disulfide-bonded. A helical transmembrane segment spans residues 100 to 120; the sequence is QMFFSFSFGFTHSFLLTVMGY. The Cytoplasmic segment spans residues 121–139; that stretch reads DRYVAICHPLRYNVLMSPR. Residues 140–160 traverse the membrane as a helical segment; that stretch reads GCACLVGCSWAGGLVMGMVVT. Topologically, residues 161-197 are extracellular; the sequence is SAIFHLAFCGHKEIHHFACHVPPLLKLACGDDVLVVA. The helical transmembrane segment at 198–218 threads the bilayer; it reads KGVGLVCITALLGCFLLILLS. Residues 219–238 lie on the Cytoplasmic side of the membrane; that stretch reads YAFIVAAILKIPSAEGRNKA. The helical transmembrane segment at 239–259 threads the bilayer; sequence FSTCASHLTVVVVHYGFASVI. At 260 to 272 the chain is on the extracellular side; sequence YLKPKSPQSLEGD. The helical transmembrane segment at 273–293 threads the bilayer; sequence TLMGITYTVLTPFLSPIIFSL. Residues 294 to 318 are Cytoplasmic-facing; that stretch reads RNKELKVAMKKTFFSKLYPEKNVMM.

It belongs to the G-protein coupled receptor 1 family.

It is found in the cell membrane. In terms of biological role, odorant receptor. The protein is Olfactory receptor 10H1 (OR10H1) of Homo sapiens (Human).